The primary structure comprises 335 residues: Probable cytosolic iron-sulfur protein assembly protein Ciao1 (335 aa).

WD repeat units follow at residues 12–51 (GHKG…WTTK), 57–96 (GHKR…FECN), 101–140 (GHEN…EFEC), 146–185 (PHTQ…SDWD), 192–231 (SHTS…NDAG), 250–289 (QHSR…KRDE), and 301–335 (AHDQ…KMTE).

This sequence belongs to the WD repeat CIA1 family.

Functionally, essential component of the cytosolic iron-sulfur (Fe/S) protein assembly machinery. Required for the maturation of extramitochondrial Fe/S proteins. The polypeptide is Probable cytosolic iron-sulfur protein assembly protein Ciao1 (Drosophila ananassae (Fruit fly)).